The sequence spans 1010 residues: Glycine--tRNA ligase (1010 aa).

The segment at 1-312 (MSEHPLTLQS…TSESVVPMIS (312 aa)) is glycine--tRNA ligase alpha subunit. The interval 313 to 1010 (STEDLLLEIG…SLCHWESVAV (698 aa)) is glycine--tRNA ligase beta subunit.

Belongs to the class-II aminoacyl-tRNA synthetase family.

It is found in the cytoplasm. It carries out the reaction tRNA(Gly) + glycine + ATP = glycyl-tRNA(Gly) + AMP + diphosphate. The sequence is that of Glycine--tRNA ligase (glyQS) from Chlamydia pneumoniae (Chlamydophila pneumoniae).